A 241-amino-acid chain; its full sequence is Glutathione S-transferase theta-3 (241 aa).

The GST N-terminal domain maps to 2–82 (GLELYLDLMS…YLSRKYKAPD (81 aa)). Glutathione contacts are provided by residues 53 to 54 (KV) and 66 to 67 (ES). The region spanning 88 to 222 (DLQTRARVDE…VVLKAKDMPP (135 aa)) is the GST C-terminal domain.

The protein belongs to the GST superfamily. Theta family. Homodimer. As to expression, expressed strongly in liver, and at lower levels in kidney and testis.

Its subcellular location is the cytoplasm. It carries out the reaction RX + glutathione = an S-substituted glutathione + a halide anion + H(+). Functionally, conjugation of reduced glutathione to a wide number of exogenous and endogenous hydrophobic electrophiles. Shows high activity towards 4-nitrobenzyl chloride (4-NBC). Also has lower activity towards 1,2-epoxy-3-(p-nitrophenoxy)propane (EPNP), cumene hydroperoxide, 1-chloro-2,4-dinitrobenzene (CDNB), 7-chloro-4-nitrobenzo-2-oxa-1,3-diazole (NBD-Cl), and ethacrynic acid. This is Glutathione S-transferase theta-3 from Mus musculus (Mouse).